The following is a 532-amino-acid chain: Glucose-6-phosphate isomerase (532 aa).

The Proton donor role is filled by Glu330. Residues His359 and Lys460 contribute to the active site.

Belongs to the GPI family.

Its subcellular location is the cytoplasm. It catalyses the reaction alpha-D-glucose 6-phosphate = beta-D-fructose 6-phosphate. The protein operates within carbohydrate biosynthesis; gluconeogenesis. It functions in the pathway carbohydrate degradation; glycolysis; D-glyceraldehyde 3-phosphate and glycerone phosphate from D-glucose: step 2/4. Functionally, catalyzes the reversible isomerization of glucose-6-phosphate to fructose-6-phosphate. This chain is Glucose-6-phosphate isomerase, found in Prochlorococcus marinus (strain MIT 9211).